Consider the following 231-residue polypeptide: 7-cyano-7-deazaguanine synthase (231 aa).

Residue 8–18 (FSGGQDSTTCL) coordinates ATP. The Zn(2+) site is built by Cys-188, Cys-197, Cys-200, and Cys-203.

It belongs to the QueC family. Requires Zn(2+) as cofactor.

The catalysed reaction is 7-carboxy-7-deazaguanine + NH4(+) + ATP = 7-cyano-7-deazaguanine + ADP + phosphate + H2O + H(+). It functions in the pathway purine metabolism; 7-cyano-7-deazaguanine biosynthesis. In terms of biological role, catalyzes the ATP-dependent conversion of 7-carboxy-7-deazaguanine (CDG) to 7-cyano-7-deazaguanine (preQ(0)). The polypeptide is 7-cyano-7-deazaguanine synthase (Salmonella newport (strain SL254)).